Reading from the N-terminus, the 47-residue chain is Photosystem II reaction center protein K (47 aa).

A propeptide spanning residues 1-10 (MALINFDLLA) is cleaved from the precursor. Residues 26–46 (LPLIPLFFFLLVFVWQAAVGF) traverse the membrane as a helical segment.

The protein belongs to the PsbK family. As to quaternary structure, PSII is composed of 1 copy each of membrane proteins PsbA, PsbB, PsbC, PsbD, PsbE, PsbF, PsbH, PsbI, PsbJ, PsbK, PsbL, PsbM, PsbT, PsbX, PsbY, Psb30/Ycf12, peripheral proteins PsbO, CyanoQ (PsbQ), PsbU, PsbV and a large number of cofactors. It forms dimeric complexes.

The protein localises to the cellular thylakoid membrane. One of the components of the core complex of photosystem II (PSII). PSII is a light-driven water:plastoquinone oxidoreductase that uses light energy to abstract electrons from H(2)O, generating O(2) and a proton gradient subsequently used for ATP formation. It consists of a core antenna complex that captures photons, and an electron transfer chain that converts photonic excitation into a charge separation. This chain is Photosystem II reaction center protein K, found in Prochlorococcus marinus (strain NATL1A).